The following is a 295-amino-acid chain: Ribosomal RNA small subunit methyltransferase H (295 aa).

Residues 35-37, Glu55, Phe82, Asp103, and Gln110 contribute to the S-adenosyl-L-methionine site; that span reads GGH.

Belongs to the methyltransferase superfamily. RsmH family.

The protein resides in the cytoplasm. The catalysed reaction is cytidine(1402) in 16S rRNA + S-adenosyl-L-methionine = N(4)-methylcytidine(1402) in 16S rRNA + S-adenosyl-L-homocysteine + H(+). Its function is as follows. Specifically methylates the N4 position of cytidine in position 1402 (C1402) of 16S rRNA. The sequence is that of Ribosomal RNA small subunit methyltransferase H from Desulfotalea psychrophila (strain LSv54 / DSM 12343).